Here is a 285-residue protein sequence, read N- to C-terminus: Homeobox protein vex1 (285 aa).

2 disordered regions span residues 30-54 (KSGNPDKESNISLPSRATGPTLPSV) and 69-88 (NEERSPPVKDQLHSQPAPQE). Positions 69-80 (NEERSPPVKDQL) are enriched in basic and acidic residues. Residues 131 to 190 (AARARTKFSPEQLEELERSFKENRYIGSSEKRRLSKVLKLSETQIKTWFQNRRMKFKRQT) constitute a DNA-binding region (homeobox).

In terms of tissue distribution, widely expressed in the embryo prior to gastrulation. Becomes restricted to the ventral marginal zone by mid/late gastrulation. Ventral localization persists during gastrulation and neurulation in the ventral region of the closed blastopore and in the proctodeum during tail bud stages.

Its subcellular location is the nucleus. Transcriptional repressor. Acts in a ventral signaling pathway downstream of bmp4 to antagonize the Spemann organizer and ventrally pattern the embryonic mesoderm. Represses transcription of the dorsal genes gsc and otx2. The protein is Homeobox protein vex1 of Xenopus laevis (African clawed frog).